We begin with the raw amino-acid sequence, 449 residues long: 8-oxoguanine deaminase (449 aa).

2 residues coordinate Zn(2+): H64 and H66. Q69 provides a ligand contact to substrate. A Zn(2+)-binding site is contributed by H232. E235 and H269 together coordinate substrate. Zn(2+) is bound by residues H269 and D320.

This sequence belongs to the metallo-dependent hydrolases superfamily. ATZ/TRZ family. As to quaternary structure, homodimer. The cofactor is Zn(2+).

It catalyses the reaction 8-oxoguanine + H2O + H(+) = urate + NH4(+). The protein operates within purine metabolism. In terms of biological role, specifically deaminates 8-Oxoguanine (8-oxoG) to uric acid. 8-oxoG is formed via the oxidation of guanine within DNA by reactive oxygen species and leads, if uncorrected, to the incorporation of 8-oxoG:A mismatches and eventually to G:C to T:A transversions. This is 8-oxoguanine deaminase from Pseudomonas aeruginosa (strain ATCC 15692 / DSM 22644 / CIP 104116 / JCM 14847 / LMG 12228 / 1C / PRS 101 / PAO1).